We begin with the raw amino-acid sequence, 462 residues long: Bindin (462 aa).

Residues 1–19 (MARQLSVILVALTLTTALA) form the signal peptide. A propeptide spanning residues 20–244 (ENFPTRTSAP…DSGRSARKKR (225 aa)) is cleaved from the precursor. 2 disordered regions span residues 155 to 194 (DDRR…APKD) and 221 to 278 (RTRR…QGMG). The fucose-binding domain stretch occupies residues 372-380 (LRHLRHHSN).

This sequence belongs to the bindin family.

The protein resides in the cytoplasmic vesicle. It is found in the secretory vesicle. It localises to the acrosome lumen. Functionally, species-specific sea urchin sperm protein required for adhesion of sperm to the egg surface during fertilization. Bindin coats the acrosomal process after it is externalized by the acrosome reaction. It binds to sulfated, fucose-containing polysaccharides on the vitelline layer receptor proteoglycans which cover the egg plasma membrane. This Lytechinus variegatus (Green sea urchin) protein is Bindin.